The chain runs to 111 residues: UPF0122 protein LACR_1522 (111 aa).

Belongs to the UPF0122 family.

Its function is as follows. Might take part in the signal recognition particle (SRP) pathway. This is inferred from the conservation of its genetic proximity to ftsY/ffh. May be a regulatory protein. The protein is UPF0122 protein LACR_1522 of Lactococcus lactis subsp. cremoris (strain SK11).